We begin with the raw amino-acid sequence, 744 residues long: Probable methylmalonyl-CoA mutase, mitochondrial (744 aa).

The B12-binding domain maps to 605–737 (QPRIMVAKMG…EKLEANLPEA (133 aa)). Position 618 (His618) interacts with adenosylcob(III)alamin.

This sequence belongs to the methylmalonyl-CoA mutase family. Homodimer. It depends on adenosylcob(III)alamin as a cofactor.

The protein resides in the mitochondrion matrix. The enzyme catalyses (R)-methylmalonyl-CoA = succinyl-CoA. Functionally, involved, in man, in the degradation of several amino acids, odd-chain fatty acids and cholesterol via propionyl-CoA to the tricarboxylic acid cycle. MCM has different functions in other species. The chain is Probable methylmalonyl-CoA mutase, mitochondrial (mmcm-1) from Caenorhabditis elegans.